The primary structure comprises 566 residues: MSLTYKPKMQHEDMQDLSSQIRFVAAEGKIWLGEQRMLVMQLSTLASFRREIISLIGVERAKGFFLRLGYQSGLMDAELARKLRPAMREEEVFLAGPQLYALKGMVKVRLLTMDIAIRDGRFNVEAEWIDSFEVDICRTELGLMNEPVCWTVLGYASGYGSAFMGRRIIFQETSCRGCGDDKCLIVGKTAEEWGDVSSFEAYFKSDPIVDERYELQTQVANLRNRLKQYDGQYYGIGHSPAYKRICETIDKAARGRVSVLLLGETGVGKEVIARSVHLRSERAEQPFVAVNCAAIPPDLIESELFGVDKGAYTGAVNARAGRFERANGGTIFLDEVIELTPRAQATLLRVLQEGELERVGGDRTRKVDVRLITATNENLEEAVKMGRFRADLFFRLNVFPVHIPPLRERVEDIPLLVEHFLRRHHKEYGKKTLGLSDRAMEACLHYQWPGNIRELENALERGVILTESNESINVESLFPGLATATEGDRLSSEGRLEEESGDSWFRQIIDQGVSLEDLEAGLMRTAMDRCGQNISQAARLLGLTRPAMAYRLKKLDPSLSVKAMGR.

Residues 235–464 enclose the Sigma-54 factor interaction domain; that stretch reads GIGHSPAYKR…LENALERGVI (230 aa). Residues 263 to 270 and 326 to 335 contribute to the ATP site; these read GETGVGKE and ANGGTIFLDE. A DNA-binding region (H-T-H motif) is located at residues 534–553; the sequence is ISQAARLLGLTRPAMAYRLK.

In terms of biological role, regulatory protein of the TOL plasmid xyl operons. In the presence of m-xylene or m-methylbenzyl alcohol XylR activates both the xylCMABN operon and the regulatory gene xylS; xylS itself activates the xylXYZLTEGFJQKIH operon. XylR interacts with sigma-54. In Pseudomonas putida (Arthrobacter siderocapsulatus), this protein is Transcriptional regulatory protein XylR (xylR).